A 296-amino-acid polypeptide reads, in one-letter code: Ethanolamine ammonia-lyase small subunit (296 aa).

Positions 209 and 230 each coordinate adenosylcob(III)alamin.

The protein belongs to the EutC family. The basic unit is a heterodimer which dimerizes to form tetramers. The heterotetramers trimerize; 6 large subunits form a core ring with 6 small subunits projecting outwards. It depends on adenosylcob(III)alamin as a cofactor.

Its subcellular location is the bacterial microcompartment. The catalysed reaction is ethanolamine = acetaldehyde + NH4(+). It functions in the pathway amine and polyamine degradation; ethanolamine degradation. In terms of biological role, catalyzes the deamination of various vicinal amino-alcohols to oxo compounds. Allows this organism to utilize ethanolamine as the sole source of nitrogen and carbon in the presence of external vitamin B12. This is Ethanolamine ammonia-lyase small subunit from Lachnoclostridium phytofermentans (strain ATCC 700394 / DSM 18823 / ISDg) (Clostridium phytofermentans).